Here is a 1077-residue protein sequence, read N- to C-terminus: MPKRTDIQSILILGAGPIVIGQACEFDYSGAQACKALREEGYRVILVNSNPATIMTDPDMADATYIEPIQWEVVRKIIEKERPDAVLPTMGGQTALNCALALEKHGVLAEFGVEMIGATADAIDKAEDRSRFDKAMKSIGLECPRADTAKTMEEAYKVLDMVGFPCIIRPSFTMGGTGGGIAYNKEEFEEICRRGLDLSPTNELLIDESLIGWKEYEMEVVRDKADNCIIVCSIENFDPMGIHTGDSITVAPAQTLTDKEYQLMRNASLAVLREIGVETGGSNVQFGINPKDGRMVIIEMNPRVSRSSALASKATGFPIAKIAAKLAVGFTLDELQNDITGGATPASFEPTIDYVVTKIPRFNFEKFAGANDRLTTQMKSVGEVMAIGRNQQESLHKALRGLEVGATGFDEMVDLDSPDALTKIRHELKEAGAERIWYIADAFRAGMSVDGVFNLTNIDRWFLVQIEEIVKLEEQVKAGGFAGLTQDVLRQMKRKGFSDARLSKLLGVAESEIRRLRDQFDIHPVYKRVDTCAAEFSSDTAYMYSSYDDECEANPTDKEKIMVLGGGPNRIGQGIEFDYCCVHASLALREDGYETIMVNCNPETVSTDYDTSDRLYFEPVTLEDVLAIARVEKPKGVIVQYGGQTPLKLARALEAAGVPIIGTSPDAIDRAEDRERFQQAVDRLGLLQPENATVTTMEQAVEKSREIGFPLVVRPSYVLGGRAMEIVYDEQDLRRYFNEAVSVSNESPVLLDRFLDDAIEVDIDAICDGERVVIGGIMEHIEQAGVHSGDSACSLPAYTLSQEIQDKMREQVEKLAFELGVRGLMNTQFAVKDNEVYLIEVNPRAARTVPFVSKATGAPLAKIAARVMAGQSLESQGFTKEIIPPYYSVKEVVLPFNKFPGVDPLLGPEMRSTGEVMGVGATFAEAYAKAELGCGNVYPEGGRALLSVREGDKQRVVDLASKLLKLGYKLDATHGTAVILGEAGINPRLVNKVHEGRPHILDRIKNNEYTYIVNTAAGRQAIEDSKVLRRGALAEKVNYTTTLNAAFATCMSHTADAKASVTSVQELHAQVQASLKA.

A carboxyphosphate synthetic domain region spans residues 1–403; the sequence is MPKRTDIQSI…SLHKALRGLE (403 aa). Positions 129, 169, 175, 176, 208, 210, 215, 241, 242, 243, 285, and 299 each coordinate ATP. In terms of domain architecture, ATP-grasp 1 spans 133–328; that stretch reads DKAMKSIGLE…IAKIAAKLAV (196 aa). Residues Gln285, Glu299, and Asn301 each contribute to the Mg(2+) site. Residues Gln285, Glu299, and Asn301 each contribute to the Mn(2+) site. The tract at residues 404-553 is oligomerization domain; sequence VGATGFDEMV…YSSYDDECEA (150 aa). Positions 554-935 are carbamoyl phosphate synthetic domain; it reads NPTDKEKIMV…AYAKAELGCG (382 aa). Residues 678–869 enclose the ATP-grasp 2 domain; it reads QQAVDRLGLL…LAKIAARVMA (192 aa). 10 residues coordinate ATP: Arg714, Arg753, Leu755, Glu760, Gly785, Val786, His787, Ser788, Gln828, and Glu840. Gln828, Glu840, and Asn842 together coordinate Mg(2+). Residues Gln828, Glu840, and Asn842 each contribute to the Mn(2+) site. Residues 936-1077 form the MGS-like domain; the sequence is NVYPEGGRAL…HAQVQASLKA (142 aa). The allosteric domain stretch occupies residues 936 to 1077; the sequence is NVYPEGGRAL…HAQVQASLKA (142 aa).

Belongs to the CarB family. As to quaternary structure, composed of two chains; the small (or glutamine) chain promotes the hydrolysis of glutamine to ammonia, which is used by the large (or ammonia) chain to synthesize carbamoyl phosphate. Tetramer of heterodimers (alpha,beta)4. Mg(2+) is required as a cofactor. Mn(2+) serves as cofactor.

The enzyme catalyses hydrogencarbonate + L-glutamine + 2 ATP + H2O = carbamoyl phosphate + L-glutamate + 2 ADP + phosphate + 2 H(+). The catalysed reaction is hydrogencarbonate + NH4(+) + 2 ATP = carbamoyl phosphate + 2 ADP + phosphate + 2 H(+). The protein operates within amino-acid biosynthesis; L-arginine biosynthesis; carbamoyl phosphate from bicarbonate: step 1/1. It participates in pyrimidine metabolism; UMP biosynthesis via de novo pathway; (S)-dihydroorotate from bicarbonate: step 1/3. In terms of biological role, large subunit of the glutamine-dependent carbamoyl phosphate synthetase (CPSase). CPSase catalyzes the formation of carbamoyl phosphate from the ammonia moiety of glutamine, carbonate, and phosphate donated by ATP, constituting the first step of 2 biosynthetic pathways, one leading to arginine and/or urea and the other to pyrimidine nucleotides. The large subunit (synthetase) binds the substrates ammonia (free or transferred from glutamine from the small subunit), hydrogencarbonate and ATP and carries out an ATP-coupled ligase reaction, activating hydrogencarbonate by forming carboxy phosphate which reacts with ammonia to form carbamoyl phosphate. The chain is Carbamoyl phosphate synthase large chain from Vibrio vulnificus (strain CMCP6).